Consider the following 388-residue polypeptide: MRYLTAGESHGPQLTAILEGVPAGLELRAEHINKELARRQKGYGRGRRMQIEKDEVKITGGVRHGKTLGSPIALVVENRDFKHWQTIMAVEPIDDEAEVKRKVTRPRPGHADLNGALKYGHRDMRNVLERSSARETTVRVAAGAVAKRILEEVGIRVAGHVIEIGGVRAKKLDYRSLEELQAVTEESPVRCFDPEAGQKMMEAIDWAKKNGDSIGGIVEVIVEGVPAGVGSYVHYDRKLDAKIAAAIVSINAFKGVEFGIGFEAARRPGSEVHDEIIWSPEQGFSRRTNRAGGFEGGVTTGMPIVVRGVMKPIPTLYKPLQSVDIETKEPFAASIERSDSCAVPAASVVAEAVVAWEVAAAIVEQFGQDRMDLIKENVERARRYAKEF.

Residues R39 and R45 each coordinate NADP(+). FMN contacts are provided by residues R130 to S132, N251 to A252, G296, K311 to T315, and R337.

Belongs to the chorismate synthase family. As to quaternary structure, homotetramer. It depends on FMNH2 as a cofactor.

The catalysed reaction is 5-O-(1-carboxyvinyl)-3-phosphoshikimate = chorismate + phosphate. It functions in the pathway metabolic intermediate biosynthesis; chorismate biosynthesis; chorismate from D-erythrose 4-phosphate and phosphoenolpyruvate: step 7/7. Functionally, catalyzes the anti-1,4-elimination of the C-3 phosphate and the C-6 proR hydrogen from 5-enolpyruvylshikimate-3-phosphate (EPSP) to yield chorismate, which is the branch point compound that serves as the starting substrate for the three terminal pathways of aromatic amino acid biosynthesis. This reaction introduces a second double bond into the aromatic ring system. This Geobacillus kaustophilus (strain HTA426) protein is Chorismate synthase.